The sequence spans 405 residues: CCA-adding enzyme (405 aa).

ATP-binding residues include glycine 8 and arginine 11. Positions 8 and 11 each coordinate CTP. Glutamate 21 and aspartate 23 together coordinate Mg(2+). ATP-binding residues include arginine 91, arginine 137, and arginine 140. Residues arginine 91, arginine 137, and arginine 140 each coordinate CTP. The region spanning 220–326 (PLSHGLSTLS…LNFFDELDLW (107 aa)) is the HD domain.

It belongs to the tRNA nucleotidyltransferase/poly(A) polymerase family. Bacterial CCA-adding enzyme type 2 subfamily. The cofactor is Mg(2+).

It carries out the reaction a tRNA precursor + 2 CTP + ATP = a tRNA with a 3' CCA end + 3 diphosphate. The enzyme catalyses a tRNA with a 3' CCA end + 2 CTP + ATP = a tRNA with a 3' CCACCA end + 3 diphosphate. In terms of biological role, catalyzes the addition and repair of the essential 3'-terminal CCA sequence in tRNAs without using a nucleic acid template. Adds these three nucleotides in the order of C, C, and A to the tRNA nucleotide-73, using CTP and ATP as substrates and producing inorganic pyrophosphate. tRNA 3'-terminal CCA addition is required both for tRNA processing and repair. Also involved in tRNA surveillance by mediating tandem CCA addition to generate a CCACCA at the 3' terminus of unstable tRNAs. While stable tRNAs receive only 3'-terminal CCA, unstable tRNAs are marked with CCACCA and rapidly degraded. In Hamiltonella defensa subsp. Acyrthosiphon pisum (strain 5AT), this protein is CCA-adding enzyme.